We begin with the raw amino-acid sequence, 232 residues long: Lipopolysaccharide core heptose(II) kinase WaaY (232 aa).

It belongs to the protein kinase superfamily. RfaY/WaaY family.

The enzyme catalyses alpha-D-Glc-(1-&gt;3)-[L-alpha-D-Hep-(1-&gt;7)]-L-alpha-D-Hep-(1-&gt;3)-4-O-PO3(2-)-L-alpha-D-Hep-(1-&gt;5)-[alpha-Kdo-(2-&gt;4)]-alpha-Kdo-(2-&gt;6)-lipid A + ATP = alpha-D-Glc-(1-&gt;3)-[L-alpha-D-Hep-(1-&gt;7)]-4-O-PO3(2-)-L-alpha-D-Hep-(1-&gt;3)-4-O-PO3(2-)-L-alpha-D-Hep-(1-&gt;5)-[alpha-Kdo-(2-&gt;4)]-alpha-Kdo-(2-&gt;6)-lipid A + ADP + H(+). It functions in the pathway bacterial outer membrane biogenesis; LPS core biosynthesis. Kinase involved in the biosynthesis of the core oligosaccharide region of lipopolysaccharide (LPS). Catalyzes the phosphorylation of the second heptose unit (HepII) of the inner core. This Escherichia coli (strain K12) protein is Lipopolysaccharide core heptose(II) kinase WaaY.